Consider the following 213-residue polypeptide: Protein brother (213 aa).

Residues 189 to 213 (HTPQTPPEDHHHRGGPGLPRGPMGW) form a disordered region. Gly residues predominate over residues 203 to 213 (GPGLPRGPMGW).

It belongs to the CBF-beta family.

The protein resides in the nucleus. Its function is as follows. Regulates the DNA-binding properties of Runt. This is Protein brother (Bro) from Drosophila melanogaster (Fruit fly).